Reading from the N-terminus, the 148-residue chain is D-aminoacyl-tRNA deacylase (148 aa).

The Gly-cisPro motif, important for rejection of L-amino acids signature appears at 136–137 (GP).

Belongs to the DTD family. As to quaternary structure, homodimer.

It is found in the cytoplasm. The enzyme catalyses glycyl-tRNA(Ala) + H2O = tRNA(Ala) + glycine + H(+). It carries out the reaction a D-aminoacyl-tRNA + H2O = a tRNA + a D-alpha-amino acid + H(+). Functionally, an aminoacyl-tRNA editing enzyme that deacylates mischarged D-aminoacyl-tRNAs. Also deacylates mischarged glycyl-tRNA(Ala), protecting cells against glycine mischarging by AlaRS. Acts via tRNA-based rather than protein-based catalysis; rejects L-amino acids rather than detecting D-amino acids in the active site. By recycling D-aminoacyl-tRNA to D-amino acids and free tRNA molecules, this enzyme counteracts the toxicity associated with the formation of D-aminoacyl-tRNA entities in vivo and helps enforce protein L-homochirality. In Kosmotoga olearia (strain ATCC BAA-1733 / DSM 21960 / TBF 19.5.1), this protein is D-aminoacyl-tRNA deacylase.